Here is a 383-residue protein sequence, read N- to C-terminus: Delta(12)-fatty-acid desaturase (383 aa).

Residues Met1 to Val24 form a disordered region. The span at Lys14–Val24 shows a compositional bias: basic and acidic residues. A helical transmembrane segment spans residues Leu56–Leu76. Positions His105–His109 match the Histidine box-1 motif. A helical membrane pass occupies residues Trp117–Trp137. Positions His141 to His145 match the Histidine box-2 motif. 3 consecutive transmembrane segments (helical) span residues Ile179–Ser199, Ile225–Ala245, and Ile252–Leu272. A Histidine box-3 motif is present at residues His315–His319.

It belongs to the fatty acid desaturase type 1 family. In terms of assembly, homo- and heterodimer. Interacts with FAD3 but not with FAD6. FAD2-FAD3 heterodimers can form a metabolic channel in which 18:1-PC is converted to 18:3-PC without releasing a free 18:2-PC intermediate. Expressed in shoots and roots. Expressed in leaves, stems, flowers and siliques.

The protein resides in the endoplasmic reticulum membrane. It localises to the microsome membrane. The enzyme catalyses (9Z)-octadecenoyl-CoA + 2 Fe(II)-[cytochrome b5] + O2 + 2 H(+) = (9Z,12Z)-octadecadienoyl-CoA + 2 Fe(III)-[cytochrome b5] + 2 H2O. It carries out the reaction (9Z)-hexadecenoyl-CoA + 2 Fe(II)-[cytochrome b5] + O2 + 2 H(+) = (9Z,12Z)-hexadecadienoyl-CoA + 2 Fe(III)-[cytochrome b5] + 2 H2O. It catalyses the reaction a (9Z)-octadecenoyl-containing glycerolipid + 2 Fe(II)-[cytochrome b5] + O2 + 2 H(+) = a (9Z,12Z)-octadecadienoyl-containing glycerolipid + 2 Fe(III)-[cytochrome b5] + 2 H2O. The catalysed reaction is (9Z)-octadecenoyl-CoA + AH2 + O2 = (9Z,12Z)-octadecadienoyl-CoA + A + 2 H2O. The enzyme catalyses (9Z)-hexadecenoyl-CoA + AH2 + O2 = (9Z,12Z)-hexadecadienoyl-CoA + A + 2 H2O. It carries out the reaction (9Z)-tetradecenoyl-CoA + 2 Fe(II)-[cytochrome b5] + O2 + 2 H(+) = (9Z,12Z)-tetradecadienoyl-CoA + 2 Fe(III)-[cytochrome b5] + 2 H2O. It catalyses the reaction (9Z)-pentadecenoyl-CoA + 2 Fe(II)-[cytochrome b5] + O2 + 2 H(+) = (9Z,12Z)-pentadecadienoyl-CoA + 2 Fe(III)-[cytochrome b5] + 2 H2O. The catalysed reaction is (9Z)-heptadecenoyl-CoA + 2 Fe(II)-[cytochrome b5] + O2 + 2 H(+) = (9Z,12Z)-heptadecadienoyl-CoA + 2 Fe(III)-[cytochrome b5] + 2 H2O. The protein operates within lipid metabolism; polyunsaturated fatty acid biosynthesis. Its function is as follows. ER (microsomal) omega-6 fatty acid desaturase introduces the second double bond in the biosynthesis of 18:3 fatty acids, important constituents of plant membranes. Delta(12)-desaturase with regioselectivity determined by the double bond (delta(9) position) and carboxyl group of the substrate. Can use both 16:1 and 18:1 fatty acids as substrates. It is thought to use cytochrome b5 as an electron donor and to act on fatty acids esterified to phosphatidylcholine (PC) and, possibly, other phospholipids. Very low constitutive hydroxylation activity. Required for desaturation of fatty acids present in extraplastidial membranes, including mitochondria. Required for salt tolerance during seed germination and early seedling growth. The polypeptide is Delta(12)-fatty-acid desaturase (Arabidopsis thaliana (Mouse-ear cress)).